We begin with the raw amino-acid sequence, 68 residues long: Conotoxin ba14a (68 aa).

The first 20 residues, 1–20 (MKLSVMFIVALVLSLSMTDG), serve as a signal peptide directing secretion. Residues 21 to 50 (LPRRAENGGRIFRQHSPDSMDPQTRQIKTR) constitute a propeptide that is removed on maturation.

Post-translationally, contains 2 disulfide bonds. As to expression, expressed by the venom duct.

The protein resides in the secreted. This chain is Conotoxin ba14a, found in Conus bayani (Bayan's cone).